The sequence spans 283 residues: Pantoate--beta-alanine ligase (283 aa).

It belongs to the pantothenate synthetase family.

It carries out the reaction (R)-pantoate + beta-alanine + ATP = (R)-pantothenate + AMP + diphosphate + H(+). The protein operates within cofactor biosynthesis; (R)-pantothenate biosynthesis; (R)-pantothenate from (R)-pantoate and beta-alanine: step 1/1. This is Pantoate--beta-alanine ligase (pan6) from Schizosaccharomyces pombe (strain 972 / ATCC 24843) (Fission yeast).